A 121-amino-acid polypeptide reads, in one-letter code: Large ribosomal subunit protein bL12 (121 aa).

The protein belongs to the bacterial ribosomal protein bL12 family. In terms of assembly, homodimer. Part of the ribosomal stalk of the 50S ribosomal subunit. Forms a multimeric L10(L12)X complex, where L10 forms an elongated spine to which 2 to 4 L12 dimers bind in a sequential fashion. Binds GTP-bound translation factors.

Its function is as follows. Forms part of the ribosomal stalk which helps the ribosome interact with GTP-bound translation factors. Is thus essential for accurate translation. This Streptococcus suis (strain 98HAH33) protein is Large ribosomal subunit protein bL12.